The sequence spans 27 residues: Protein YkiD (27 aa).

In Escherichia coli (strain K12), this protein is Protein YkiD.